The primary structure comprises 456 residues: MLPSQSPAIFTVSRLNQTVRLLLEHEMGQVWISGEISNFTQPASGHWYFTLKDDTAQVRCAMFRNSNRRVTFRPQHGQQVLVRANITLYEPRGDYQIIVESMQPAGEGLLQQKYEQLKAKLQAEGLFDQQYKKPLPSPAHCVGVITSKTGAALHDILHVLKRRDPSLPVIIYPTAVQGDDAPGQIVRAIELANQRNECDVLIVGRGGGSLEDLWSFNDERVARAIFASRIPVVSAVGHETDVTIADFVADLRAPTPSAAAEVVSRNQQELLRQVQSARQRLEMAMDYYLANRTRRFTQIHHRLQQQHPQLRLARQQTMLERLKKRMSFALENQLKRAGQQQQRLTQRLNQQNPQPKIHRAQTRIQQLEYRLAEILRAQLSATRERFGNAVTHLEAVSPLSTLARGYSVTTATDGNVLKKVKQVKAGEMLTTRLEDGWIESEVKNIQPVKKSRKKVH.

It belongs to the XseA family. Heterooligomer composed of large and small subunits.

The protein resides in the cytoplasm. It carries out the reaction Exonucleolytic cleavage in either 5'- to 3'- or 3'- to 5'-direction to yield nucleoside 5'-phosphates.. In terms of biological role, bidirectionally degrades single-stranded DNA into large acid-insoluble oligonucleotides, which are then degraded further into small acid-soluble oligonucleotides. This Escherichia coli (strain ATCC 8739 / DSM 1576 / NBRC 3972 / NCIMB 8545 / WDCM 00012 / Crooks) protein is Exodeoxyribonuclease 7 large subunit.